A 94-amino-acid chain; its full sequence is Co-chaperonin GroES (94 aa).

It belongs to the GroES chaperonin family. In terms of assembly, heptamer of 7 subunits arranged in a ring. Interacts with the chaperonin GroEL.

It is found in the cytoplasm. Functionally, together with the chaperonin GroEL, plays an essential role in assisting protein folding. The GroEL-GroES system forms a nano-cage that allows encapsulation of the non-native substrate proteins and provides a physical environment optimized to promote and accelerate protein folding. GroES binds to the apical surface of the GroEL ring, thereby capping the opening of the GroEL channel. The protein is Co-chaperonin GroES of Lactiplantibacillus plantarum (strain ATCC BAA-793 / NCIMB 8826 / WCFS1) (Lactobacillus plantarum).